Reading from the N-terminus, the 361-residue chain is Chorismate synthase (361 aa).

Residue Arg48 participates in NADP(+) binding. FMN is bound by residues 125–127 (RSS), 238–239 (NA), Gly278, 293–297 (KPTSS), and Arg319.

Belongs to the chorismate synthase family. Homotetramer. It depends on FMNH2 as a cofactor.

It catalyses the reaction 5-O-(1-carboxyvinyl)-3-phosphoshikimate = chorismate + phosphate. It participates in metabolic intermediate biosynthesis; chorismate biosynthesis; chorismate from D-erythrose 4-phosphate and phosphoenolpyruvate: step 7/7. Its function is as follows. Catalyzes the anti-1,4-elimination of the C-3 phosphate and the C-6 proR hydrogen from 5-enolpyruvylshikimate-3-phosphate (EPSP) to yield chorismate, which is the branch point compound that serves as the starting substrate for the three terminal pathways of aromatic amino acid biosynthesis. This reaction introduces a second double bond into the aromatic ring system. The chain is Chorismate synthase from Aliivibrio fischeri (strain ATCC 700601 / ES114) (Vibrio fischeri).